We begin with the raw amino-acid sequence, 215 residues long: Probable GTP-binding protein EngB (215 aa).

Residues 26–200 (EGIEVAFAGR…RAKLDEWFAP (175 aa)) enclose the EngB-type G domain. GTP contacts are provided by residues 34–41 (GRSNAGKS), 61–65 (GRTQL), 79–82 (DLPG), 146–149 (TKAD), and 179–181 (FSS). Residues serine 41 and threonine 63 each contribute to the Mg(2+) site.

The protein belongs to the TRAFAC class TrmE-Era-EngA-EngB-Septin-like GTPase superfamily. EngB GTPase family. The cofactor is Mg(2+).

Necessary for normal cell division and for the maintenance of normal septation. The sequence is that of Probable GTP-binding protein EngB from Aliivibrio fischeri (strain ATCC 700601 / ES114) (Vibrio fischeri).